We begin with the raw amino-acid sequence, 320 residues long: ADP/ATP translocase 4 (320 aa).

Residues Met1 to Ser20 lie on the Mitochondrial intermembrane side of the membrane. The stretch at Val19–Leu111 is one Solcar 1 repeat. The helical transmembrane segment at Phe21–Gln50 threads the bilayer. Topologically, residues Val51–Asn87 are mitochondrial matrix. A helical transmembrane segment spans residues Leu88–Phe112. 2 residues coordinate ADP: Arg93 and Lys105. Residues Met113–Phe122 lie on the Mitochondrial intermembrane side of the membrane. A helical membrane pass occupies residues Trp123–Val143. 2 Solcar repeats span residues Arg124–Leu214 and Thr221–Phe308. Topologically, residues Val144 to Gly191 are mitochondrial matrix. A helical membrane pass occupies residues Val192–Lys212. Residues Gly213–Phe223 lie on the Mitochondrial intermembrane side of the membrane. Residues Leu224 to Phe244 form a helical membrane-spanning segment. The Mitochondrial matrix portion of the chain corresponds to Asp245 to Gly284. Arg248 lines the ADP pocket. An important for transport activity region spans residues Arg248 to Met253. The Nucleotide carrier signature motif motif lies at Arg248 to Met253. A helical transmembrane segment spans residues Ala285 to Tyr302. At Asp303–Asp320 the chain is on the mitochondrial intermembrane side.

The protein belongs to the mitochondrial carrier (TC 2.A.29) family. Monomer. Specifically expressed in undifferentiated embryonic stem cells and germ cells. Expression is down-regulated after embryonic stem cells differentiation. In adults, only expressed in developing gametes in testis. In testis, expressed at higher level in spermatocytes. Expression is probably associated with entry of the male germ cells into meiosis. Expressed at very low level in Sertoli cells.

The protein resides in the mitochondrion inner membrane. The protein localises to the membrane. Its subcellular location is the cell projection. It localises to the cilium. It is found in the flagellum membrane. It catalyses the reaction ADP(in) + ATP(out) = ADP(out) + ATP(in). The enzyme catalyses dATP(out) + ADP(in) = dATP(in) + ADP(out). The catalysed reaction is dADP(in) + ADP(out) = dADP(out) + ADP(in). It carries out the reaction H(+)(in) = H(+)(out). The matrix-open state (m-state) is inhibited by the membrane-permeable bongkrekic acid (BKA). The cytoplasmic-open state (c-state) is inhibited by the membrane-impermeable toxic inhibitor carboxyatractyloside (CATR). Proton transporter activity is inhibited by ADP:ATP antiporter activity. In terms of biological role, ADP:ATP antiporter that mediates import of ADP into the mitochondrial matrix for ATP synthesis, and export of ATP out to fuel the cell. Cycles between the cytoplasmic-open state (c-state) and the matrix-open state (m-state): operates by the alternating access mechanism with a single substrate-binding site intermittently exposed to either the cytosolic (c-state) or matrix (m-state) side of the inner mitochondrial membrane. Specifically required during spermatogenesis, probably to mediate ADP:ATP exchange in spermatocytes. Large ATP supplies from mitochondria may be critical for normal progression of spermatogenesis during early stages of meiotic prophase I, including DNA double-strand break repair and chromosomal synapsis. In addition to its ADP:ATP antiporter activity, also involved in mitochondrial uncoupling and mitochondrial permeability transition pore (mPTP) activity. Plays a role in mitochondrial uncoupling by acting as a proton transporter: proton transport uncouples the proton flows via the electron transport chain and ATP synthase to reduce the efficiency of ATP production and cause mitochondrial thermogenesis. Proton transporter activity is inhibited by ADP:ATP antiporter activity, suggesting that SLC25A31/ANT4 acts as a master regulator of mitochondrial energy output by maintaining a delicate balance between ATP production (ADP:ATP antiporter activity) and thermogenesis (proton transporter activity). Proton transporter activity requires free fatty acids as cofactor, but does not transport it. Among nucleotides, may also exchange ADP for dATP and dADP. Also plays a key role in mPTP opening, a non-specific pore that enables free passage of the mitochondrial membranes to solutes of up to 1.5 kDa, and which contributes to cell death. It is however unclear if SLC25A31/ANT4 constitutes a pore-forming component of mPTP or regulates it. The chain is ADP/ATP translocase 4 from Mus musculus (Mouse).